Reading from the N-terminus, the 273-residue chain is Ribosomal RNA small subunit methyltransferase A (273 aa).

Residues Asn19, Leu21, Gly46, Glu67, Asp92, and Asn113 each coordinate S-adenosyl-L-methionine.

It belongs to the class I-like SAM-binding methyltransferase superfamily. rRNA adenine N(6)-methyltransferase family. RsmA subfamily.

It localises to the cytoplasm. It carries out the reaction adenosine(1518)/adenosine(1519) in 16S rRNA + 4 S-adenosyl-L-methionine = N(6)-dimethyladenosine(1518)/N(6)-dimethyladenosine(1519) in 16S rRNA + 4 S-adenosyl-L-homocysteine + 4 H(+). Its function is as follows. Specifically dimethylates two adjacent adenosines (A1518 and A1519) in the loop of a conserved hairpin near the 3'-end of 16S rRNA in the 30S particle. May play a critical role in biogenesis of 30S subunits. In Hahella chejuensis (strain KCTC 2396), this protein is Ribosomal RNA small subunit methyltransferase A.